Reading from the N-terminus, the 522-residue chain is Stellatic acid synthase (522 aa).

A helical transmembrane segment spans residues 23-43 (IYGIYEPLLALFAVYSVAVVV). Residues asparagine 267 and asparagine 451 are each glycosylated (N-linked (GlcNAc...) asparagine). Residue cysteine 464 participates in heme binding. Residue asparagine 495 is glycosylated (N-linked (GlcNAc...) asparagine).

Belongs to the cytochrome P450 family. Requires heme as cofactor.

It localises to the membrane. It carries out the reaction stellata-2,6,19-triene + 3 reduced [NADPH--hemoprotein reductase] + 3 O2 = stellatate + 3 oxidized [NADPH--hemoprotein reductase] + 4 H2O + 4 H(+). It functions in the pathway secondary metabolite biosynthesis; terpenoid biosynthesis. Its function is as follows. Cytochrome P450 monooxygenase; part of the gene cluster that mediates the biosynthesis of the sesterterpene stellatic acid. The first step in the pathway is performed by the stellatatriene synthase that possesses both prenyl transferase and terpene cyclase activity, converting isopentenyl diphosphate and dimethylallyl diphosphate into geranylgeranyl diphosphate (GGDP) and then converting GGDP into stellata-2,6,19-triene. The cytochrome P450 monooxygenase Stl-P450 then catalyzes three successive oxidation reactions on the C-20 methyl group to generate the carboxylic acid of stellatic acid. This chain is Stellatic acid synthase, found in Emericella variicolor (Aspergillus stellatus).